Consider the following 159-residue polypeptide: Transcription elongation factor GreA (159 aa).

The stretch at 43-76 (LSENAEYDAAREEQSQLEAKIGDLENKLASATIL) forms a coiled coil.

The protein belongs to the GreA/GreB family.

Necessary for efficient RNA polymerase transcription elongation past template-encoded arresting sites. The arresting sites in DNA have the property of trapping a certain fraction of elongating RNA polymerases that pass through, resulting in locked ternary complexes. Cleavage of the nascent transcript by cleavage factors such as GreA or GreB allows the resumption of elongation from the new 3'terminus. GreA releases sequences of 2 to 3 nucleotides. The protein is Transcription elongation factor GreA of Chlorobaculum parvum (strain DSM 263 / NCIMB 8327) (Chlorobium vibrioforme subsp. thiosulfatophilum).